Reading from the N-terminus, the 417-residue chain is Serpin H1 (417 aa).

The signal sequence occupies residues 1-17; the sequence is MRSLLLGTLCLLAVALA. At Lys93 the chain carries N6-succinyllysine. Residues Asn119 and Asn124 are each glycosylated (N-linked (GlcNAc...) asparagine). Ser140 is subject to Phosphoserine. Lys206 bears the N6-acetyllysine mark. An N6-succinyllysine modification is found at Lys295. Residue Lys318 is modified to N6-acetyllysine. The N-linked (GlcNAc...) asparagine glycan is linked to Asn394. The Prevents secretion from ER signature appears at 414–417; that stretch reads RDEL.

This sequence belongs to the serpin family.

It is found in the endoplasmic reticulum lumen. Binds specifically to collagen. Could be involved as a chaperone in the biosynthetic pathway of collagen. The chain is Serpin H1 (Serpinh1) from Mus musculus (Mouse).